The primary structure comprises 396 residues: Cystathionine beta-lyase (396 aa).

Lys-211 is modified (N6-(pyridoxal phosphate)lysine).

This sequence belongs to the trans-sulfuration enzymes family. Homotetramer. The cofactor is pyridoxal 5'-phosphate.

It is found in the cytoplasm. The catalysed reaction is L,L-cystathionine + H2O = L-homocysteine + pyruvate + NH4(+). It catalyses the reaction an S-substituted L-cysteine + H2O = a thiol + pyruvate + NH4(+). It functions in the pathway amino-acid biosynthesis; L-methionine biosynthesis via de novo pathway; L-homocysteine from L-cystathionine: step 1/1. Catalyzes the cleavage of cystathionine to homocysteine, pyruvate and ammonia during methionine biosynthesis. This is Cystathionine beta-lyase (metC) from Haemophilus influenzae (strain ATCC 51907 / DSM 11121 / KW20 / Rd).